The sequence spans 161 residues: C-type lectin lectoxin-Lio3 (161 aa).

Positions 1 to 23 are cleaved as a signal peptide; it reads MRRFIFMSLGLLVLAFSLSGIGA. 3 disulfides stabilise this stretch: Cys27/Cys38, Cys55/Cys154, and Cys129/Cys146. One can recognise a C-type lectin domain in the interval 34 to 155; the sequence is HNISCYKLFT…CGLLHYFICQ (122 aa). N-linked (GlcNAc...) asparagine glycosylation occurs at Asn35. The Mannose-binding motif lies at 117–119; sequence KGE. Glu127, Asn142, and Asp143 together coordinate Ca(2+).

It belongs to the true venom lectin family. Expressed by the venom gland.

It is found in the secreted. In terms of biological role, mannose-binding lectin which recognizes specific carbohydrate structures and agglutinates a variety of animal cells by binding to cell-surface glycoproteins and glycolipids. May be a calcium-dependent lectin. This is C-type lectin lectoxin-Lio3 from Erythrolamprus poecilogyrus (Water snake).